A 430-amino-acid chain; its full sequence is Tol-Pal system protein TolB (430 aa).

The N-terminal stretch at 1–26 (MSLMTKLGLRTLVASCLIAVGGAAHA) is a signal peptide.

This sequence belongs to the TolB family. In terms of assembly, the Tol-Pal system is composed of five core proteins: the inner membrane proteins TolA, TolQ and TolR, the periplasmic protein TolB and the outer membrane protein Pal. They form a network linking the inner and outer membranes and the peptidoglycan layer.

The protein localises to the periplasm. Part of the Tol-Pal system, which plays a role in outer membrane invagination during cell division and is important for maintaining outer membrane integrity. The polypeptide is Tol-Pal system protein TolB (Paraburkholderia phytofirmans (strain DSM 17436 / LMG 22146 / PsJN) (Burkholderia phytofirmans)).